The sequence spans 170 residues: Large ribosomal subunit protein uL11 (170 aa).

The protein belongs to the universal ribosomal protein uL11 family. Part of the ribosomal stalk of the 50S ribosomal subunit. Interacts with L10 and the large rRNA to form the base of the stalk. L10 forms an elongated spine to which L12 dimers bind in a sequential fashion forming a multimeric L10(L12)X complex.

Functionally, forms part of the ribosomal stalk which helps the ribosome interact with GTP-bound translation factors. In Saccharolobus islandicus (strain M.16.27) (Sulfolobus islandicus), this protein is Large ribosomal subunit protein uL11.